A 121-amino-acid polypeptide reads, in one-letter code: Large ribosomal subunit protein uL14 (121 aa).

It belongs to the universal ribosomal protein uL14 family. As to quaternary structure, part of the 50S ribosomal subunit. Forms a cluster with proteins L3 and L19. In the 70S ribosome, L14 and L19 interact and together make contacts with the 16S rRNA in bridges B5 and B8.

Functionally, binds to 23S rRNA. Forms part of two intersubunit bridges in the 70S ribosome. This chain is Large ribosomal subunit protein uL14, found in Prochlorococcus marinus (strain MIT 9301).